Here is a 97-residue protein sequence, read N- to C-terminus: Defensin-like protein 245 (97 aa).

An N-terminal signal peptide occupies residues 1-24 (MKFAAILLVTCVLFSLLPSHLSQG). Intrachain disulfides connect Cys39–Cys96, Cys50–Cys79, Cys58–Cys89, and Cys77–Cys91.

This sequence belongs to the DEFL family. Flower buds and roots.

It localises to the secreted. The protein is Defensin-like protein 245 (SCRL4) of Arabidopsis thaliana (Mouse-ear cress).